We begin with the raw amino-acid sequence, 243 residues long: Probable enoyl-CoA hydratase echA6 (243 aa).

This sequence belongs to the enoyl-CoA hydratase/isomerase family.

The catalysed reaction is a (3S)-3-hydroxyacyl-CoA = a (2E)-enoyl-CoA + H2O. The enzyme catalyses a 4-saturated-(3S)-3-hydroxyacyl-CoA = a (3E)-enoyl-CoA + H2O. In terms of biological role, could possibly oxidize fatty acids using specific components. The polypeptide is Probable enoyl-CoA hydratase echA6 (echA6) (Mycobacterium bovis (strain ATCC BAA-935 / AF2122/97)).